The sequence spans 485 residues: GTPase Obg (485 aa).

Positions 1–159 (MKFVDEVRIF…LTLRLELKLL (159 aa)) constitute an Obg domain. An OBG-type G domain is found at 160-332 (ADVGLLGFPN…LMDSVAEVLF (173 aa)). GTP contacts are provided by residues 166–173 (GFPNAGKS), 191–195 (FTTLV), 213–216 (DIPG), 284–287 (NKLD), and 313–315 (SCA). Mg(2+)-binding residues include Ser173 and Thr193. Low complexity-rich tracts occupy residues 367 to 385 (AGAAAATKSATKKSAAAKK), 394 to 428 (RKAGAVAKTSAARKAGTAAAKKAPARKSGTAPVKK), 437 to 446 (RKSGTAPAKK), and 455 to 474 (RKSGSSGKAAAKKASAATKR). A disordered region spans residues 367–485 (AGAAAATKSA…PARKSGGGRS (119 aa)).

It belongs to the TRAFAC class OBG-HflX-like GTPase superfamily. OBG GTPase family. As to quaternary structure, monomer. Requires Mg(2+) as cofactor.

It localises to the cytoplasm. Its function is as follows. An essential GTPase which binds GTP, GDP and possibly (p)ppGpp with moderate affinity, with high nucleotide exchange rates and a fairly low GTP hydrolysis rate. Plays a role in control of the cell cycle, stress response, ribosome biogenesis and in those bacteria that undergo differentiation, in morphogenesis control. The sequence is that of GTPase Obg from Myxococcus xanthus (strain DK1622).